The primary structure comprises 75 residues: Alpha-elapitoxin-Bc2a (75 aa).

Residues 1-2 (YT) form the signal peptide. Cystine bridges form between cysteine 5–cysteine 24, cysteine 17–cysteine 45, cysteine 30–cysteine 34, cysteine 49–cysteine 60, and cysteine 61–cysteine 66.

The protein belongs to the three-finger toxin family. Long-chain subfamily. Type II alpha-neurotoxin sub-subfamily. Monomer in solution, homodimer in crystal state. Expressed by the venom gland.

It localises to the secreted. In terms of biological role, binds to muscular and neuronal nicotinic acetylcholine receptor (nAChR) and inhibits acetylcholine from binding to the receptor, thereby impairing neuromuscular and neuronal transmission. Reversibly blocks chick and mouse muscle nicotinic acetylcholine receptors. Blocks muscle type nAChR with an IC(50)=30 nM, when heterologously expressed in oocytes. Also binds with high affinity to alpha-7/CHRNA7 nAChRs. In addition, shows a weak inhibition of neuronal alpha-3-beta-2/CHRNA3-CHRNB2 nAChR (IC(50)=2.9 uM). Selectively binds to alpha-1-delta subunit interface of the mouse muscle nicotinic acetylcholine receptor, with a 10-fold higher affinity for the adult than for the fetal receptors. In vivo, when intraperitoneally injected into mice, causes flaccid paralysis and respiratory distress, followed by death within 2-4 hours. The sequence is that of Alpha-elapitoxin-Bc2a from Bungarus candidus (Malayan krait).